Consider the following 436-residue polypeptide: Trigger factor (436 aa).

A PPIase FKBP-type domain is found at 161 to 246 (GDQVNIDFVG…VNSVAAPQLP (86 aa)).

Belongs to the FKBP-type PPIase family. Tig subfamily.

The protein resides in the cytoplasm. The catalysed reaction is [protein]-peptidylproline (omega=180) = [protein]-peptidylproline (omega=0). Functionally, involved in protein export. Acts as a chaperone by maintaining the newly synthesized protein in an open conformation. Functions as a peptidyl-prolyl cis-trans isomerase. The sequence is that of Trigger factor from Stutzerimonas stutzeri (strain A1501) (Pseudomonas stutzeri).